The sequence spans 86 residues: Small ribosomal subunit protein uS17 (86 aa).

This sequence belongs to the universal ribosomal protein uS17 family. Part of the 30S ribosomal subunit.

In terms of biological role, one of the primary rRNA binding proteins, it binds specifically to the 5'-end of 16S ribosomal RNA. The chain is Small ribosomal subunit protein uS17 from Lactococcus lactis subsp. cremoris (strain MG1363).